The chain runs to 674 residues: Glutaminase kidney isoform, mitochondrial (674 aa).

The N-terminal 54 residues, 1–54, are a transit peptide targeting the mitochondrion; it reads MMRLRGSAMLRELLLRPPAAVGGVLRRTQPLGTLCRRPRGGSRPAAGLVAAARL. A disordered region spans residues 56–123; it reads PWWGGGGRAK…PGETDAFGNS (68 aa). The span at 58–71 shows a compositional bias: gly residues; it reads WGGGGRAKGPGSGG. Over residues 89–101 the composition is skewed to low complexity; sequence PPQQQQQQQQQPG. 2 positions are modified to N6-succinyllysine: Lys135 and Lys169. Ser291 lines the substrate pocket. Lys316 carries the post-translational modification N6-acetyllysine. The interval 320-327 is highly mobile activation loop; that stretch reads GLRFNKLF. Substrate contacts are provided by Asn340, Glu386, Asn393, Tyr419, Tyr471, and Val489. 2 ANK repeats span residues 590–619 and 624–653; these read DSRTALHVAAAEGHVEVVKFLLEACKVNPF and WNNTPMDEALHFGHHDVFKILQEYQVQYTP. A disordered region spans residues 652–674; the sequence is TPQGDSDDGKENQTVHKNLDGLL. Position 657 is a phosphoserine (Ser657). The segment covering 658–674 has biased composition (basic and acidic residues); the sequence is DDGKENQTVHKNLDGLL.

Belongs to the glutaminase family. Homotetramer, dimer of dimers. Tetramer composed of 68 and 65 kDa peptides in a 1:3 ratio. Can assemble into higher oligomers (in vitro), but the physiological significance of this is not clear. Interacts with RAF1 and MAP2K2. Interacts with ATCAY; the interaction is direct and may control GLS localization, negatively regulating its activity. In terms of processing, synthesized as a 74-kDa cytosolic precursor which is proteolytically processed by the mitochondrial-processing peptidase (MPP) via a 72-kDa intermediate to yield the mature mitochondrial 68- and 65-kDa subunits. In terms of tissue distribution, kidney, brain, and intestine.

It is found in the mitochondrion. It localises to the cytoplasm. The protein resides in the cytosol. The protein localises to the mitochondrion matrix. The enzyme catalyses L-glutamine + H2O = L-glutamate + NH4(+). Enzyme activity is increased by phosphate, due to increased kcat and increased substrate affinity. Catalyzes the first reaction in the primary pathway for the renal catabolism of glutamine. Plays a role in maintaining acid-base homeostasis. Regulates the levels of the neurotransmitter glutamate, the main excitatory neurotransmitter in the brain. The polypeptide is Glutaminase kidney isoform, mitochondrial (Gls) (Rattus norvegicus (Rat)).